The primary structure comprises 406 residues: Probable tRNA sulfurtransferase (406 aa).

The region spanning 62–167 is the THUMP domain; that stretch reads AEVSNRLTKV…QDATYLSFED (106 aa). Residues 185–186, 210–211, arginine 267, glycine 289, and glutamine 298 each bind ATP; these read ML and HF.

The protein belongs to the ThiI family.

It localises to the cytoplasm. The catalysed reaction is [ThiI sulfur-carrier protein]-S-sulfanyl-L-cysteine + a uridine in tRNA + 2 reduced [2Fe-2S]-[ferredoxin] + ATP + H(+) = [ThiI sulfur-carrier protein]-L-cysteine + a 4-thiouridine in tRNA + 2 oxidized [2Fe-2S]-[ferredoxin] + AMP + diphosphate. It catalyses the reaction [ThiS sulfur-carrier protein]-C-terminal Gly-Gly-AMP + S-sulfanyl-L-cysteinyl-[cysteine desulfurase] + AH2 = [ThiS sulfur-carrier protein]-C-terminal-Gly-aminoethanethioate + L-cysteinyl-[cysteine desulfurase] + A + AMP + 2 H(+). The protein operates within cofactor biosynthesis; thiamine diphosphate biosynthesis. Its function is as follows. Catalyzes the ATP-dependent transfer of a sulfur to tRNA to produce 4-thiouridine in position 8 of tRNAs, which functions as a near-UV photosensor. Also catalyzes the transfer of sulfur to the sulfur carrier protein ThiS, forming ThiS-thiocarboxylate. This is a step in the synthesis of thiazole, in the thiamine biosynthesis pathway. The sulfur is donated as persulfide by IscS. The sequence is that of Probable tRNA sulfurtransferase from Lactococcus lactis subsp. cremoris (strain MG1363).